The sequence spans 206 residues: Protein GrpE (206 aa).

A compositionally biased stretch (basic and acidic residues) spans 1–18 (MNNEDKKLQDEQLQKETV). Residues 1–21 (MNNEDKKLQDEQLQKETVEAA) form a disordered region.

It belongs to the GrpE family. Homodimer.

Its subcellular location is the cytoplasm. Participates actively in the response to hyperosmotic and heat shock by preventing the aggregation of stress-denatured proteins, in association with DnaK and GrpE. It is the nucleotide exchange factor for DnaK and may function as a thermosensor. Unfolded proteins bind initially to DnaJ; upon interaction with the DnaJ-bound protein, DnaK hydrolyzes its bound ATP, resulting in the formation of a stable complex. GrpE releases ADP from DnaK; ATP binding to DnaK triggers the release of the substrate protein, thus completing the reaction cycle. Several rounds of ATP-dependent interactions between DnaJ, DnaK and GrpE are required for fully efficient folding. This is Protein GrpE from Photobacterium profundum (strain SS9).